A 129-amino-acid polypeptide reads, in one-letter code: Membrane protein 0 (129 aa).

The interval 1–25 (MATVHYSRRPGTPPVTLTSSPSMDD) is disordered. A PPXY motif motif is present at residues 44–47 (PPPY). The chain crosses the membrane as a helical span at residues 100-120 (FLILFGILTLTAVVVAIVAVF).

Belongs to the varicellovirus ORF0 protein family. As to quaternary structure, interacts with host ITCH; this interaction probably mediates ITCH degradation.

The protein localises to the host Golgi apparatus membrane. The protein is Membrane protein 0 of Homo sapiens (Human).